The following is a 223-amino-acid chain: Ras-related protein Rab-21 (223 aa).

A2 bears the N-acetylalanine mark. GTP contacts are provided by G26, G29, K30, T31, S32, N43, D44, H46, T48, and T49. T31 serves as a coordination point for Mg(2+). A Switch 1 motif is present at residues 41–54 (KFNDKHITTLQASF). Positions 49 and 72 each coordinate Mg(2+). The short motif at 74–92 (AGQERFHALGPIYYRDSNG) is the Switch 2 element. Residues G75, N130, K131, D133, A161, and K162 each coordinate GTP. S-geranylgeranyl cysteine attachment occurs at residues C219 and C220. C220 is subject to Cysteine methyl ester. Positions 221–223 (SSG) are cleaved as a propeptide — removed in mature form.

This sequence belongs to the small GTPase superfamily. Rab family. Interacts with the cytoplasmic tail of integrins ITGA1, ITGA2, ITGA5, ITGA6, ITGA11 and ITGB1; this interaction is dependent upon its GDP/GTP cycle. Interacts with ANKRD27. Interacts (active GTP-bound form) with TMED10; the interaction is indirect and regulates TMED10 abundance and localization at the Golgi. It depends on Mg(2+) as a cofactor.

It localises to the endoplasmic reticulum membrane. The protein resides in the golgi apparatus. The protein localises to the trans-Golgi network. It is found in the golgi apparatus membrane. Its subcellular location is the early endosome membrane. It localises to the cytoplasmic vesicle membrane. The protein resides in the cleavage furrow. The protein localises to the cell projection. It is found in the neuron projection. It catalyses the reaction GTP + H2O = GDP + phosphate + H(+). Its activity is regulated as follows. Regulated by guanine nucleotide exchange factors (GEFs) including ANKRD27 and RABGEF1, which promote the exchange of bound GDP for free GTP. Regulated by GTPase activating proteins (GAPs) which increase the GTP hydrolysis activity. Inhibited by GDP dissociation inhibitors (GDIs). The small GTPases Rab are key regulators of intracellular membrane trafficking, from the formation of transport vesicles to their fusion with membranes. Rabs cycle between an inactive GDP-bound form and an active GTP-bound form that is able to recruit to membranes different sets of downstream effectors directly responsible for vesicle formation, movement, tethering and fusion. RAB21 is involved in membrane trafficking control. Regulates integrin internalization and recycling, but does not influence the traffic of endosomally translocated receptors in general. As a result, may regulate cell adhesion and migration. During the mitosis of adherent cells, controls the endosomal trafficking of integrins which is required for the successful completion of cytokinesis. Involved in neurite growth. Modulates protein levels of the cargo receptors TMED2 and TMED10, and required for appropriate Golgi localization of TMED10. The sequence is that of Ras-related protein Rab-21 (RAB21) from Canis lupus familiaris (Dog).